The primary structure comprises 285 residues: ATP synthase gamma chain (285 aa).

It belongs to the ATPase gamma chain family. F-type ATPases have 2 components, CF(1) - the catalytic core - and CF(0) - the membrane proton channel. CF(1) has five subunits: alpha(3), beta(3), gamma(1), delta(1), epsilon(1). CF(0) has three main subunits: a, b and c.

Its subcellular location is the cell membrane. Produces ATP from ADP in the presence of a proton gradient across the membrane. The gamma chain is believed to be important in regulating ATPase activity and the flow of protons through the CF(0) complex. The protein is ATP synthase gamma chain of Geobacillus kaustophilus (strain HTA426).